A 163-amino-acid polypeptide reads, in one-letter code: ATP synthase subunit b (163 aa).

Residues 10–29 traverse the membrane as a helical segment; that stretch reads VFMQMFHFLLMLVVLRLFAY.

This sequence belongs to the ATPase B chain family. In terms of assembly, F-type ATPases have 2 components, F(1) - the catalytic core - and F(0) - the membrane proton channel. F(1) has five subunits: alpha(3), beta(3), gamma(1), delta(1), epsilon(1). F(0) has three main subunits: a(1), b(2) and c(10-14). The alpha and beta chains form an alternating ring which encloses part of the gamma chain. F(1) is attached to F(0) by a central stalk formed by the gamma and epsilon chains, while a peripheral stalk is formed by the delta and b chains.

The protein localises to the cell membrane. In terms of biological role, f(1)F(0) ATP synthase produces ATP from ADP in the presence of a proton or sodium gradient. F-type ATPases consist of two structural domains, F(1) containing the extramembraneous catalytic core and F(0) containing the membrane proton channel, linked together by a central stalk and a peripheral stalk. During catalysis, ATP synthesis in the catalytic domain of F(1) is coupled via a rotary mechanism of the central stalk subunits to proton translocation. Its function is as follows. Component of the F(0) channel, it forms part of the peripheral stalk, linking F(1) to F(0). This Desulforudis audaxviator (strain MP104C) protein is ATP synthase subunit b.